An 87-amino-acid polypeptide reads, in one-letter code: Small ribosomal subunit protein bS20 (87 aa).

The segment covering 1–12 (MANHKSALKRNR) has biased composition (basic residues). The tract at residues 1–21 (MANHKSALKRNRQAAVRNARN) is disordered.

The protein belongs to the bacterial ribosomal protein bS20 family.

Binds directly to 16S ribosomal RNA. In Syntrophotalea carbinolica (strain DSM 2380 / NBRC 103641 / GraBd1) (Pelobacter carbinolicus), this protein is Small ribosomal subunit protein bS20.